A 43-amino-acid chain; its full sequence is Neurotrophic factor BDNF (43 aa).

The protein belongs to the NGF-beta family.

It localises to the secreted. Its function is as follows. Promotes the survival of neuronal populations that are all located either in the central nervous system or directly connected to it. The sequence is that of Neurotrophic factor BDNF (BDNF) from Macrovipera lebetinus (Levantine viper).